The following is a 295-amino-acid chain: Bifunctional protein FolD (295 aa).

Residues 166-168, Ser-195, and Ile-236 contribute to the NADP(+) site; that span reads GRS.

Belongs to the tetrahydrofolate dehydrogenase/cyclohydrolase family. As to quaternary structure, homodimer.

It carries out the reaction (6R)-5,10-methylene-5,6,7,8-tetrahydrofolate + NADP(+) = (6R)-5,10-methenyltetrahydrofolate + NADPH. It catalyses the reaction (6R)-5,10-methenyltetrahydrofolate + H2O = (6R)-10-formyltetrahydrofolate + H(+). It participates in one-carbon metabolism; tetrahydrofolate interconversion. Functionally, catalyzes the oxidation of 5,10-methylenetetrahydrofolate to 5,10-methenyltetrahydrofolate and then the hydrolysis of 5,10-methenyltetrahydrofolate to 10-formyltetrahydrofolate. This is Bifunctional protein FolD from Chlorobium chlorochromatii (strain CaD3).